The chain runs to 725 residues: Fatty acid oxidation complex subunit alpha (725 aa).

The enoyl-CoA hydratase/isomerase stretch occupies residues 1–189 (MLYKGDTLYL…KIGLVDGVVK (189 aa)). Asp-296 provides a ligand contact to substrate. The interval 311-725 (ETPKQAAVLG…RLNQPVRLVL (415 aa)) is 3-hydroxyacyl-CoA dehydrogenase. NAD(+) is bound by residues Met-324, Asp-343, 400 to 402 (VVE), Lys-407, and Ser-429. His-450 functions as the For 3-hydroxyacyl-CoA dehydrogenase activity in the catalytic mechanism. Position 453 (Asn-453) interacts with NAD(+). 2 residues coordinate substrate: Asn-500 and Tyr-660.

In the N-terminal section; belongs to the enoyl-CoA hydratase/isomerase family. It in the C-terminal section; belongs to the 3-hydroxyacyl-CoA dehydrogenase family. Heterotetramer of two alpha chains (FadB) and two beta chains (FadA).

It catalyses the reaction a (3S)-3-hydroxyacyl-CoA + NAD(+) = a 3-oxoacyl-CoA + NADH + H(+). The enzyme catalyses a (3S)-3-hydroxyacyl-CoA = a (2E)-enoyl-CoA + H2O. The catalysed reaction is a 4-saturated-(3S)-3-hydroxyacyl-CoA = a (3E)-enoyl-CoA + H2O. It carries out the reaction (3S)-3-hydroxybutanoyl-CoA = (3R)-3-hydroxybutanoyl-CoA. It catalyses the reaction a (3Z)-enoyl-CoA = a 4-saturated (2E)-enoyl-CoA. The enzyme catalyses a (3E)-enoyl-CoA = a 4-saturated (2E)-enoyl-CoA. The protein operates within lipid metabolism; fatty acid beta-oxidation. In terms of biological role, involved in the aerobic and anaerobic degradation of long-chain fatty acids via beta-oxidation cycle. Catalyzes the formation of 3-oxoacyl-CoA from enoyl-CoA via L-3-hydroxyacyl-CoA. It can also use D-3-hydroxyacyl-CoA and cis-3-enoyl-CoA as substrate. This Salmonella paratyphi A (strain ATCC 9150 / SARB42) protein is Fatty acid oxidation complex subunit alpha.